The chain runs to 91 residues: Cell division topological specificity factor (91 aa).

The protein belongs to the MinE family.

Prevents the cell division inhibition by proteins MinC and MinD at internal division sites while permitting inhibition at polar sites. This ensures cell division at the proper site by restricting the formation of a division septum at the midpoint of the long axis of the cell. The protein is Cell division topological specificity factor of Gloeobacter violaceus (strain ATCC 29082 / PCC 7421).